Consider the following 432-residue polypeptide: GTPase Obg (432 aa).

An Obg domain is found at 1–159; the sequence is MKFIDTAKFT…YEVKAELKVL (159 aa). One can recognise an OBG-type G domain in the interval 160–332; the sequence is ADVGFVGLPN…LLLKIAKELE (173 aa). Residues 166–173, 191–195, 213–216, 284–287, and 313–315 contribute to the GTP site; these read GLPNAGKS, FTTLN, DLPG, NKMD, and SGL. Positions 173 and 193 each coordinate Mg(2+). In terms of domain architecture, OCT spans 354 to 432; sequence RLEEDEEDIQ…VFEYELEWMD (79 aa).

The protein belongs to the TRAFAC class OBG-HflX-like GTPase superfamily. OBG GTPase family. As to quaternary structure, monomer. Mg(2+) serves as cofactor.

Its subcellular location is the cytoplasm. In terms of biological role, an essential GTPase which binds GTP, GDP and possibly (p)ppGpp with moderate affinity, with high nucleotide exchange rates and a fairly low GTP hydrolysis rate. Plays a role in control of the cell cycle, stress response, ribosome biogenesis and in those bacteria that undergo differentiation, in morphogenesis control. The chain is GTPase Obg from Mesoplasma florum (strain ATCC 33453 / NBRC 100688 / NCTC 11704 / L1) (Acholeplasma florum).